The sequence spans 306 residues: MRVLFAGTPAVAVPSLDALVQAGFDVVAVLTRPDAPVGRKRVLTPSPVAARAAELGIEVIHAAKVDAEVTARIAAAAPDAAAIVAYGGLIPRAALDVPRHGWINLHFSLLPAWRGAAPVQRAVMAGDDITGAVTFLLEEGLDTGPVFGTLTESVRPDDTSGELLERLSHSGAALLAQTLSAIEAGRAVAVPQSGDVSLAPKLGIDDGRIDWHEPALAIGRRARGVTPEPGAWTTLDGQRVKLEPVALRTDAPALQPGQVLLDGKSVLVGTGSHPVELTRIQPSGKKMMAAADWARGQVALEGVVFE.

Residue 108 to 111 (SLLP) coordinates (6S)-5,6,7,8-tetrahydrofolate.

Belongs to the Fmt family.

The enzyme catalyses L-methionyl-tRNA(fMet) + (6R)-10-formyltetrahydrofolate = N-formyl-L-methionyl-tRNA(fMet) + (6S)-5,6,7,8-tetrahydrofolate + H(+). Functionally, attaches a formyl group to the free amino group of methionyl-tRNA(fMet). The formyl group appears to play a dual role in the initiator identity of N-formylmethionyl-tRNA by promoting its recognition by IF2 and preventing the misappropriation of this tRNA by the elongation apparatus. This Arthrobacter sp. (strain FB24) protein is Methionyl-tRNA formyltransferase.